The sequence spans 435 residues: Enolase (435 aa).

Residue Q163 participates in (2R)-2-phosphoglycerate binding. E205 serves as the catalytic Proton donor. D243, E292, and D319 together coordinate Mg(2+). Residues K344, R373, S374, and K395 each contribute to the (2R)-2-phosphoglycerate site. Catalysis depends on K344, which acts as the Proton acceptor.

It belongs to the enolase family. Requires Mg(2+) as cofactor.

Its subcellular location is the cytoplasm. The protein localises to the secreted. It is found in the cell surface. The enzyme catalyses (2R)-2-phosphoglycerate = phosphoenolpyruvate + H2O. It functions in the pathway carbohydrate degradation; glycolysis; pyruvate from D-glyceraldehyde 3-phosphate: step 4/5. In terms of biological role, catalyzes the reversible conversion of 2-phosphoglycerate (2-PG) into phosphoenolpyruvate (PEP). It is essential for the degradation of carbohydrates via glycolysis. This is Enolase from Streptococcus uberis (strain ATCC BAA-854 / 0140J).